The sequence spans 1067 residues: SURP and G-patch domain-containing protein 2 (1067 aa).

The residue at position 93 (serine 93) is a Phosphoserine. Positions 177-189 (KESRDYDLDHPGE) are enriched in basic and acidic residues. Residues 177–199 (KESRDYDLDHPGEVDSVSRSSGQ) are disordered. Serine 206 carries the post-translational modification Phosphoserine. Lysine 219 participates in a covalent cross-link: Glycyl lysine isopeptide (Lys-Gly) (interchain with G-Cter in SUMO2). Threonine 265 carries the post-translational modification Phosphothreonine. Phosphoserine occurs at positions 267 and 586. An SURP motif 1 repeat occupies 573 to 616 (IDQLVMRVIQGRLSPRERTLLLQDPAYWFLSDESSLEYKYYKLK). Residues 668–767 (SQGPRGLKAK…CPSANMDAKT (100 aa)) form a disordered region. Positions 680–691 (TTAQQTSLSSGT) are enriched in polar residues. Serine 740 is subject to Phosphoserine. At threonine 744 the chain carries Phosphothreonine. The stretch at 770–813 (TAEKLARFVAQVGPEIEQFSIENSTDNPDLWFLHDQSSSAFKFY) is one SURP motif 2 repeat. A compositionally biased stretch (polar residues) spans 825–840 (SFQSTGEAGDSVQSPT). Disordered stretches follow at residues 825 to 944 (SFQS…KSLK) and 967 to 991 (RIAYDRPRGRPIAKKKKPKDMEFSQ). Serine 838 is modified (phosphoserine). Basic and acidic residues predominate over residues 843 to 856 (KEGKGEPQEGHPEQ). Acidic residues predominate over residues 866 to 883 (LPEEEEEDEEESEDEGGE). A compositionally biased stretch (polar residues) spans 919–931 (ASTPGLSQASSGS). The segment covering 975–984 (GRPIAKKKKP) has biased composition (basic residues). The Nuclear localization signal signature appears at 980-985 (KKKKPK). Positions 996–1042 (DKNVGFQMLQKMGWKEGHGLGSLGKGIREPVSVGALSEGEGLGADGP) constitute a G-patch domain.

It is found in the nucleus. Its function is as follows. May play a role in mRNA splicing. The polypeptide is SURP and G-patch domain-containing protein 2 (Sugp2) (Mus musculus (Mouse)).